We begin with the raw amino-acid sequence, 76 residues long: Protein OPG128 (76 aa).

An intrachain disulfide couples Cys17 to Cys21.

Belongs to the orthopoxvirus OPG128 family. Interacts with sulfhydryl oxidase OPG072; this interaction involves formation of a transient disulfide-bonded intermediate, allowing disulfide bond transfer. Interacts with OPG088; this interaction involves formation of a transient disulfide-bonded intermediate, allowing disulfide bond transfer.

Late protein which probably participates in disulfide bond formation by functioning as a thiol-disulfide transfer protein between membrane-associated OPG072 and OPG08. The complete pathway for formation of disulfide bonds in intracellular virion membrane proteins sequentially involves oxidation of OPG072, OPG128 and OPG08. This Bos taurus (Bovine) protein is Protein OPG128 (OPG128).